The chain runs to 322 residues: Malate dehydrogenase (322 aa).

Residues 10–15 (GSGQIG) and aspartate 34 each bind NAD(+). Arginine 83 and arginine 89 together coordinate substrate. Residues asparagine 96 and 119 to 121 (ITN) each bind NAD(+). Substrate is bound by residues asparagine 121 and arginine 152. Catalysis depends on histidine 176, which acts as the Proton acceptor.

This sequence belongs to the LDH/MDH superfamily. MDH type 3 family.

It carries out the reaction (S)-malate + NAD(+) = oxaloacetate + NADH + H(+). Functionally, catalyzes the reversible oxidation of malate to oxaloacetate. The protein is Malate dehydrogenase of Nitrobacter hamburgensis (strain DSM 10229 / NCIMB 13809 / X14).